Consider the following 472-residue polypeptide: Alanine--anticapsin ligase (472 aa).

Residue E109 participates in Mg(2+) binding. ATP is bound by residues K138 and K178. The ATP-grasp domain occupies 142–355 (RDAFNKAGVK…MAQLLLDVLC (214 aa)). L182 contacts Mg(2+). Residues 184–185 (SS), 226–229 (EEFL), and Q268 contribute to the ATP site. Residues E273 and 309-311 (HTE) contribute to the substrate site. 2 residues coordinate Mg(2+): E311 and E324. 328-331 (RFAG) contacts substrate.

In terms of assembly, monomer or homodimer. It depends on Mg(2+) as a cofactor.

It carries out the reaction L-anticapsin + L-alanine + ATP = bacilysin + ADP + phosphate + H(+). Its pathway is antibiotic biosynthesis; bacilysin biosynthesis. Its function is as follows. Part of the bacABCDEFG operon responsible for the biosynthesis of bacilysin, an irreversible inactivator of the glutaminase domain of glucosamine synthetase. Catalyzes the formation of alpha-dipeptides from various L-amino acids in the presence of ATP. In vivo catalyzes the ligation of L-alanine and L-anticapsin (epoxycyclohexanonyl-Ala) to produce the final bacilysin antibiotic (L-Ala-L-4S-cyclohexenonyl-Ala dipeptide). The substrate specificity is restricted to small amino acids such as L-Ala, for the N-terminal end of the dipeptide, whereas a wide range of hydrophobic amino acids such as L-Phe, L-Tyr and L-Met are recognized for the C-terminal end. This is Alanine--anticapsin ligase from Bacillus subtilis (strain 168).